Here is a 383-residue protein sequence, read N- to C-terminus: Transcription termination factor Rho (383 aa).

The tract at residues 1–22 is disordered; sequence MTIETTTKKRPRAARPPRPRES. Residues 8–17 are compositionally biased toward basic residues; that stretch reads KKRPRAARPP. The Rho RNA-BD domain occupies 26 to 93; the sequence is LETVAGLLDV…AEVESVNGST (68 aa). Residues 132-137, 144-149, and Arg-175 contribute to the ATP site; these read GKGQRG and KAGKTM.

This sequence belongs to the Rho family. Homohexamer. The homohexamer assembles into an open ring structure.

In terms of biological role, facilitates transcription termination by a mechanism that involves Rho binding to the nascent RNA, activation of Rho's RNA-dependent ATPase activity, and release of the mRNA from the DNA template. The sequence is that of Transcription termination factor Rho from Streptosporangium roseum (strain ATCC 12428 / DSM 43021 / JCM 3005 / KCTC 9067 / NCIMB 10171 / NRRL 2505 / NI 9100).